A 369-amino-acid polypeptide reads, in one-letter code: Type 2 DNA topoisomerase 6 subunit A (369 aa).

In terms of domain architecture, Topo IIA-type catalytic spans 11–149; sequence KGDALAREKL…FHMRPEEDGA (139 aa). Catalysis depends on tyrosine 106, which acts as the O-(5'-phospho-DNA)-tyrosine intermediate. Mg(2+) is bound by residues glutamate 202 and aspartate 254.

The protein belongs to the TOP6A family. Homodimer. Heterotetramer of two Top6A and two Top6B chains. Mg(2+) serves as cofactor.

It catalyses the reaction ATP-dependent breakage, passage and rejoining of double-stranded DNA.. Relaxes both positive and negative superturns and exhibits a strong decatenase activity. In Methanosarcina mazei (strain ATCC BAA-159 / DSM 3647 / Goe1 / Go1 / JCM 11833 / OCM 88) (Methanosarcina frisia), this protein is Type 2 DNA topoisomerase 6 subunit A.